Reading from the N-terminus, the 778-residue chain is Ubiquitin thioesterase trabid (778 aa).

2 consecutive RanBP2-type zinc fingers follow at residues 5 to 36 (KDDA…SKPL) and 89 to 118 (DSEK…KRGG). A compositionally biased stretch (polar residues) spans 187–197 (ASHNQSQSQHR). The disordered stretch occupies residues 187–226 (ASHNQSQSQHRQPVLQQQMQLQLQPQQQRESSSSAAVPPQ). The segment covering 198–226 (QPVLQQQMQLQLQPQQQRESSSSAAVPPQ) has biased composition (low complexity). The RanBP2-type 3 zinc-finger motif lies at 232 to 261 (YVSKWACNSCTYENWPRSIKCSMCGKTRER). Residues 265–290 (GSQNDLHASSSLNSQEENQQQLQQPN) are disordered. Over residues 273-288 (SSSLNSQEENQQQLQQ) the composition is skewed to low complexity. Positions 507-665 (MFVLWNRSAG…RGHFSALVPM (159 aa)) constitute an OTU domain. C518 functions as the Nucleophile in the catalytic mechanism. H658 serves as the catalytic Proton acceptor. Phosphoserine occurs at positions 770, 771, and 775.

This sequence belongs to the peptidase C64 family. As to quaternary structure, interacts with Apc.

The enzyme catalyses Thiol-dependent hydrolysis of ester, thioester, amide, peptide and isopeptide bonds formed by the C-terminal Gly of ubiquitin (a 76-residue protein attached to proteins as an intracellular targeting signal).. Its function is as follows. Positive regulator of the Wnt signaling pathway. Specifically cleaves 'Lys-63'-linked ubiquitin chains. May act by deubiquitinating APC protein, a negative regulator of Wnt-mediated transcription. Required for an efficient wg response, but not for other signaling responses, in the eye. The protein is Ubiquitin thioesterase trabid (trbd) of Drosophila melanogaster (Fruit fly).